A 179-amino-acid polypeptide reads, in one-letter code: Peptide deformylase 2 (179 aa).

Fe cation contacts are provided by Cys-104 and His-146. Glu-147 is a catalytic residue. Residue His-150 participates in Fe cation binding.

The protein belongs to the polypeptide deformylase family. The cofactor is Fe(2+).

The enzyme catalyses N-terminal N-formyl-L-methionyl-[peptide] + H2O = N-terminal L-methionyl-[peptide] + formate. Functionally, removes the formyl group from the N-terminal Met of newly synthesized proteins. Requires at least a dipeptide for an efficient rate of reaction. N-terminal L-methionine is a prerequisite for activity but the enzyme has broad specificity at other positions. In Streptomyces coelicolor (strain ATCC BAA-471 / A3(2) / M145), this protein is Peptide deformylase 2.